The following is a 93-amino-acid chain: MRIFVIALTLLFGWLQYTLWFGKNGVSDYYTVEDEIEVQQQVNSKLQARNNEMFAEIDDLRQGLDAIEERARHELGLVKDGETFYRIVDEEEH.

The Cytoplasmic portion of the chain corresponds to Met-1–Ile-3. Residues Phe-4–Phe-21 form a helical membrane-spanning segment. The Periplasmic segment spans residues Gly-22–His-93. Positions Thr-31–Leu-75 form a coiled coil.

Belongs to the FtsB family. In terms of assembly, part of a complex composed of FtsB, FtsL and FtsQ.

The protein localises to the cell inner membrane. In terms of biological role, essential cell division protein. May link together the upstream cell division proteins, which are predominantly cytoplasmic, with the downstream cell division proteins, which are predominantly periplasmic. The protein is Cell division protein FtsB of Vibrio campbellii (strain ATCC BAA-1116).